The following is a 653-amino-acid chain: Acetyl-coenzyme A synthetase (653 aa).

CoA contacts are provided by residues 196–199 (RGGK) and Thr315. ATP-binding positions include 391-393 (GEP), 415-420 (DTWWQT), Asp506, and Arg521. Ser529 contacts CoA. Position 532 (Arg532) interacts with ATP. Mg(2+) contacts are provided by Val543 and Val548. An N6-acetyllysine modification is found at Lys618.

Belongs to the ATP-dependent AMP-binding enzyme family. Requires Mg(2+) as cofactor. Acetylated. Deacetylation by the SIR2-homolog deacetylase activates the enzyme.

The enzyme catalyses acetate + ATP + CoA = acetyl-CoA + AMP + diphosphate. Its function is as follows. Catalyzes the conversion of acetate into acetyl-CoA (AcCoA), an essential intermediate at the junction of anabolic and catabolic pathways. AcsA undergoes a two-step reaction. In the first half reaction, AcsA combines acetate with ATP to form acetyl-adenylate (AcAMP) intermediate. In the second half reaction, it can then transfer the acetyl group from AcAMP to the sulfhydryl group of CoA, forming the product AcCoA. This Laribacter hongkongensis (strain HLHK9) protein is Acetyl-coenzyme A synthetase.